The chain runs to 269 residues: Embryonic polyadenylate-binding protein 2 (269 aa).

The interval 26–54 is disordered; sequence EAQGWGAWGRTEKTSLVPSAGSDKEAEEN. One can recognise an RRM domain in the interval 139 to 216; it reads RSVYVGNVDY…RVIKVLPKRT (78 aa). The tract at residues 240–269 is disordered; it reads LQGSLQRKPRLRPHGQSRGRGRASPWFSPY. Residues 246 to 260 are compositionally biased toward basic residues; it reads RKPRLRPHGQSRGRG.

The protein resides in the cytoplasm. Functionally, binds the poly(A) tail of mRNA. The polypeptide is Embryonic polyadenylate-binding protein 2 (Pabpn1l) (Rattus norvegicus (Rat)).